Consider the following 178-residue polypeptide: Fatty-acid and retinol-binding protein 1 (178 aa).

The N-terminal stretch at 1-16 (MYHQLILLALIGTIMA) is a signal peptide. Coiled coils occupy residues 67–89 (DAAL…ELRN) and 129–154 (IKQA…LKVT).

The protein belongs to the fatty-acid and retinol-binding protein (FARBP) family. Not glycosylated.

It is found in the secreted. Functionally, binds retinol and different fatty acids. The sequence is that of Fatty-acid and retinol-binding protein 1 from Loa loa (Eye worm).